Reading from the N-terminus, the 809-residue chain is Phenylalanine--tRNA ligase beta subunit (809 aa).

One can recognise a tRNA-binding domain in the interval 39–154; it reads APPTSKIVVG…EDTPVGQDIR (116 aa). Residues 405-480 form the B5 domain; sequence PQRAPVKMRV…RIYGFEKIPA (76 aa). The Mg(2+) site is built by Asp-458, Asp-464, Glu-467, and Glu-468. In terms of domain architecture, FDX-ACB spans 707 to 808; it reads SKFPPVRRDI…RMARAGARLR (102 aa).

Belongs to the phenylalanyl-tRNA synthetase beta subunit family. Type 1 subfamily. In terms of assembly, tetramer of two alpha and two beta subunits. It depends on Mg(2+) as a cofactor.

It is found in the cytoplasm. It catalyses the reaction tRNA(Phe) + L-phenylalanine + ATP = L-phenylalanyl-tRNA(Phe) + AMP + diphosphate + H(+). The sequence is that of Phenylalanine--tRNA ligase beta subunit from Burkholderia lata (strain ATCC 17760 / DSM 23089 / LMG 22485 / NCIMB 9086 / R18194 / 383).